The following is a 185-amino-acid chain: Ribosome-recycling factor (185 aa).

The protein belongs to the RRF family.

It localises to the cytoplasm. Its function is as follows. Responsible for the release of ribosomes from messenger RNA at the termination of protein biosynthesis. May increase the efficiency of translation by recycling ribosomes from one round of translation to another. This chain is Ribosome-recycling factor, found in Lactococcus lactis subsp. cremoris (strain SK11).